Reading from the N-terminus, the 141-residue chain is VLSAADKTNVKGVFSKIGGHADEYGAETLERMFVAYPQTKTYFPHFDLQHGSAQIKAHGKKVAAALVEAVNHIDDIAGALSKLSDLHAQKLRVDPVNFKFLGHCFLVVVAIHHPSALTPEVHASLDKFLCAVGTVLTAKYR.

The 141-residue stretch at 1 to 141 (VLSAADKTNV…VGTVLTAKYR (141 aa)) folds into the Globin domain. Position 58 (H58) interacts with O2. H87 serves as a coordination point for heme b.

This sequence belongs to the globin family. In terms of assembly, heterotetramer of two alpha chains and two beta chains. Red blood cells.

Its function is as follows. Involved in oxygen transport from the lung to the various peripheral tissues. The sequence is that of Hemoglobin subunit alpha-A (HBAA) from Branta canadensis (Canada goose).